The chain runs to 245 residues: tRNA pseudouridine synthase A 2 (245 aa).

Asp-53 acts as the Nucleophile in catalysis. Substrate is bound at residue Tyr-111.

This sequence belongs to the tRNA pseudouridine synthase TruA family. In terms of assembly, homodimer.

It catalyses the reaction uridine(38/39/40) in tRNA = pseudouridine(38/39/40) in tRNA. Its function is as follows. Formation of pseudouridine at positions 38, 39 and 40 in the anticodon stem and loop of transfer RNAs. This is tRNA pseudouridine synthase A 2 from Bacillus cereus (strain ZK / E33L).